A 314-amino-acid chain; its full sequence is Serine/threonine-protein phosphatase CPPED1 (314 aa).

At Ser2 the chain carries Phosphoserine. The segment at 47–250 is catalytic; sequence KAWSTGDCDN…KVVFSGHYHR (204 aa). A divalent metal cation contacts are provided by Asp53, Asp90, Asn127, and His247. Ser294 carries the post-translational modification Phosphoserine.

The protein belongs to the metallophosphoesterase superfamily. CPPED1 family. The cofactor is a divalent metal cation.

The protein localises to the cytoplasm. The catalysed reaction is O-phospho-L-seryl-[protein] + H2O = L-seryl-[protein] + phosphate. It carries out the reaction O-phospho-L-threonyl-[protein] + H2O = L-threonyl-[protein] + phosphate. Functionally, protein phosphatase that dephosphorylates AKT family kinase specifically at 'Ser-473', blocking cell cycle progression and promoting cell apoptosis. May play an inhibitory role in glucose uptake by adipocytes. This chain is Serine/threonine-protein phosphatase CPPED1 (CPPED1), found in Pongo abelii (Sumatran orangutan).